The chain runs to 368 residues: Ferrochelatase (368 aa).

2 residues coordinate Fe cation: His209 and Glu290. A disordered region spans residues Ala341–Gln368.

This sequence belongs to the ferrochelatase family.

The protein localises to the cytoplasm. It carries out the reaction heme b + 2 H(+) = protoporphyrin IX + Fe(2+). The protein operates within porphyrin-containing compound metabolism; protoheme biosynthesis; protoheme from protoporphyrin-IX: step 1/1. In terms of biological role, catalyzes the ferrous insertion into protoporphyrin IX. The polypeptide is Ferrochelatase (Nitrosococcus oceani (strain ATCC 19707 / BCRC 17464 / JCM 30415 / NCIMB 11848 / C-107)).